The primary structure comprises 363 residues: Tetraacyldisaccharide 4'-kinase (363 aa).

78–85 (TVGGNGKT) is an ATP binding site.

It belongs to the LpxK family.

The catalysed reaction is a lipid A disaccharide + ATP = a lipid IVA + ADP + H(+). The protein operates within glycolipid biosynthesis; lipid IV(A) biosynthesis; lipid IV(A) from (3R)-3-hydroxytetradecanoyl-[acyl-carrier-protein] and UDP-N-acetyl-alpha-D-glucosamine: step 6/6. Functionally, transfers the gamma-phosphate of ATP to the 4'-position of a tetraacyldisaccharide 1-phosphate intermediate (termed DS-1-P) to form tetraacyldisaccharide 1,4'-bis-phosphate (lipid IVA). This is Tetraacyldisaccharide 4'-kinase from Wigglesworthia glossinidia brevipalpis.